Here is a 153-residue protein sequence, read N- to C-terminus: Nucleoside diphosphate kinase (153 aa).

Residues Lys-13, Phe-61, Arg-89, Thr-95, Arg-106, and Asn-116 each coordinate ATP. Catalysis depends on His-119, which acts as the Pros-phosphohistidine intermediate.

This sequence belongs to the NDK family. In terms of assembly, homohexamer. The cofactor is Mg(2+).

Its subcellular location is the cytoplasm. It carries out the reaction a 2'-deoxyribonucleoside 5'-diphosphate + ATP = a 2'-deoxyribonucleoside 5'-triphosphate + ADP. It catalyses the reaction a ribonucleoside 5'-diphosphate + ATP = a ribonucleoside 5'-triphosphate + ADP. Major role in the synthesis of nucleoside triphosphates other than ATP. The ATP gamma phosphate is transferred to the NDP beta phosphate via a ping-pong mechanism, using a phosphorylated active-site intermediate. This chain is Nucleoside diphosphate kinase (NDK), found in Brugia malayi (Filarial nematode worm).